The sequence spans 240 residues: Probable transcriptional regulatory protein BLi02909/BL01150 (240 aa).

The segment covering 1–14 (MAGHSKWKNIQRRK) has biased composition (basic residues). The interval 1-21 (MAGHSKWKNIQRRKNAQDAKR) is disordered.

It belongs to the TACO1 family.

The protein localises to the cytoplasm. This chain is Probable transcriptional regulatory protein BLi02909/BL01150, found in Bacillus licheniformis (strain ATCC 14580 / DSM 13 / JCM 2505 / CCUG 7422 / NBRC 12200 / NCIMB 9375 / NCTC 10341 / NRRL NRS-1264 / Gibson 46).